A 433-amino-acid polypeptide reads, in one-letter code: Zinc finger and SCAN domain-containing protein 4 (433 aa).

One can recognise an SCAN box domain in the interval 44–126 (RMVLNSFQDS…RFIEDLTDDS (83 aa)). Polar residues-rich tracts occupy residues 165-185 (TTREANMGTPSQTSQDTSLET), 195-210 (GWNSSSKTTRVNENIT), and 277-299 (QPEQSSPESALTHQSNEGNSTCE). Disordered regions lie at residues 165 to 210 (TTRE…ENIT) and 275 to 301 (ISQPEQSSPESALTHQSNEGNSTCEVH). 4 consecutive C2H2-type zinc fingers follow at residues 312 to 334 (YKCEECPKVFKYLCHLLAHQRRH), 340 to 362 (FVCPECQKGFFQISDLRVHQIIH), 368 to 390 (FTCSMCKKSFSHKTNLRSHERIH), and 396 to 418 (YTCPFCKTSYRQSSTYHRHMRTH).

It is found in the nucleus. The protein resides in the chromosome. Its subcellular location is the telomere. Functionally, embryonic stem (ES) cell-specific transcription factor required to regulate ES cell pluripotency. Binds telomeres and plays a key role in genomic stability in ES cells by regulating telomere elongation. Acts as an activator of spontaneous telomere sister chromatid exchange (T-SCE) and telomere elongation in undifferentiated ES cells. This is Zinc finger and SCAN domain-containing protein 4 (ZSCAN4) from Homo sapiens (Human).